Reading from the N-terminus, the 721-residue chain is Polyribonucleotide nucleotidyltransferase (721 aa).

2 residues coordinate Mg(2+): Asp-495 and Asp-501. In terms of domain architecture, KH spans 562-621 (PRLLSFRIDPELIGTVIGPGGRTIKGITERTNTKIDIEDSGIVTIASHDGAAAEEAQKII). Residues 631–699 (GEMFSGSITR…NRGRINLTLR (69 aa)) form the S1 motif domain. Residues 700–721 (GVPQSGESTEVEPQPTPVAPLS) form a disordered region.

The protein belongs to the polyribonucleotide nucleotidyltransferase family. Mg(2+) is required as a cofactor.

It localises to the cytoplasm. The enzyme catalyses RNA(n+1) + phosphate = RNA(n) + a ribonucleoside 5'-diphosphate. Functionally, involved in mRNA degradation. Catalyzes the phosphorolysis of single-stranded polyribonucleotides processively in the 3'- to 5'-direction. This Synechococcus sp. (strain CC9902) protein is Polyribonucleotide nucleotidyltransferase.